The primary structure comprises 314 residues: Inactive protein FRIGIDA (314 aa).

A compositionally biased stretch (low complexity) spans 1–18 (MSNYPPTVAAQPTTTANP). Residues 1–31 (MSNYPPTVAAQPTTTANPLLQRHQSEQRRRE) are disordered. A coiled-coil region spans residues 67 to 97 (VAVETFKRQFDDLQKHIESIENAIDSKLESN).

It belongs to the Frigida family.

It localises to the nucleus. This is Inactive protein FRIGIDA (FRI) from Arabidopsis thaliana (Mouse-ear cress).